Consider the following 127-residue polypeptide: UPF0102 protein Mmwyl1_2395 (127 aa).

It belongs to the UPF0102 family.

The chain is UPF0102 protein Mmwyl1_2395 from Marinomonas sp. (strain MWYL1).